Here is a 910-residue protein sequence, read N- to C-terminus: DNA mismatch repair protein MutS (910 aa).

The segment covering 1–11 (MEAKVEEKEPE) has biased composition (basic and acidic residues). Positions 1–21 (MEAKVEEKEPEPVENAGPDAP) are disordered. ATP is bound at residue 658 to 665 (GPNMGGKS).

Belongs to the DNA mismatch repair MutS family.

This protein is involved in the repair of mismatches in DNA. It is possible that it carries out the mismatch recognition step. This protein has a weak ATPase activity. In Brucella suis (strain ATCC 23445 / NCTC 10510), this protein is DNA mismatch repair protein MutS.